The chain runs to 172 residues: MIAVLLLVFGMTPDYIFPVSADIPVVPNFDAQKTVGKWHPIGMASKLPEVPEYEQKISPMDHMVELTDGDMKLTANYMDGVCKEATAMLKHTDKPGVFKFTGGEIRMMDIDYEKYLIMYMKKSTFEAMYLSARGSDVGDDIKEKFKKLVLEQNFPEAHIKYFNAEQCTPTAA.

The signal sequence occupies residues 1-21 (MIAVLLLVFGMTPDYIFPVSA). Cys82 and Cys167 are joined by a disulfide.

This sequence belongs to the calycin superfamily. Lipocalin family. In terms of tissue distribution, secreted by the epididymal epithelial cells.

The protein localises to the secreted. The protein resides in the extracellular space. Functionally, could transport small hydrophobic molecules into the epididymal fluid during the sperm maturation. Binds to the head region of spermatozoa and plays a key role in sperm maturation. This chain is Epididymal secretory protein 4, found in Zootoca vivipara (Common lizard).